We begin with the raw amino-acid sequence, 533 residues long: MNNQDDRIIIFDTTLRDGEQSPGATLNGDEKLAIARALARLGVDVIEAGFPRASRGDFDAVQRIAAEVGTENGPTICGLARATKGDIEAAGNALKPAFSNRIHTFIATSDIHLEYKLRKSRKDVLAIAPEMVAYAKTFTNDVEFSPEDAGRSDPEFLYQILEAVIDAGATTVNIPDTVGYTTPAEFGALIKGIKENVPNIDRAIISVHGHNDLGLAVANFLEAVKNGARQLECTINGIGERAGNAALEELVMALHVRRQYYNPFLGRPADSEAPLTSINTKEIYKTSRLVSNLTGLSVQANKAIVGLNAFAHESGIHQDGVLKNKLTYEIMDAQSIGLTDNQIILGKHSGRNAFRTRLAELGFDLSDNDLNKAFLRFKDLADKKKEITDWDLEAIVKDETQQPPELFRLELVQVSCGDHAQPTATITIRTPGGKELTDAAIGTGPVDAIYKAINRVVQVPNELIEYSVQSVTAGIDAIGEVTIRLRHEGRIYSGHAANTDIVVASARAYISALNRLYAALQEDVSANPAKASL.

A Pyruvate carboxyltransferase domain is found at 8-269; that stretch reads IIIFDTTLRD…YYNPFLGRPA (262 aa). Positions 17, 208, 210, and 244 each coordinate Mn(2+). Positions 408 to 533 are regulatory domain; the sequence is RLELVQVSCG…VSANPAKASL (126 aa).

This sequence belongs to the alpha-IPM synthase/homocitrate synthase family. LeuA type 1 subfamily. In terms of assembly, homodimer. Requires Mn(2+) as cofactor.

The protein resides in the cytoplasm. It carries out the reaction 3-methyl-2-oxobutanoate + acetyl-CoA + H2O = (2S)-2-isopropylmalate + CoA + H(+). It functions in the pathway amino-acid biosynthesis; L-leucine biosynthesis; L-leucine from 3-methyl-2-oxobutanoate: step 1/4. Its function is as follows. Catalyzes the condensation of the acetyl group of acetyl-CoA with 3-methyl-2-oxobutanoate (2-ketoisovalerate) to form 3-carboxy-3-hydroxy-4-methylpentanoate (2-isopropylmalate). The chain is 2-isopropylmalate synthase from Picosynechococcus sp. (strain ATCC 27264 / PCC 7002 / PR-6) (Agmenellum quadruplicatum).